The following is a 267-amino-acid chain: 4-hydroxy-tetrahydrodipicolinate reductase (267 aa).

Residues 8–13 (GAAGRM) and D34 contribute to the NAD(+) site. R35 serves as a coordination point for NADP(+). NAD(+) is bound by residues 98–100 (GTT) and 122–125 (AANF). The Proton donor/acceptor role is filled by H155. H156 is a (S)-2,3,4,5-tetrahydrodipicolinate binding site. Catalysis depends on K159, which acts as the Proton donor. 165–166 (GT) serves as a coordination point for (S)-2,3,4,5-tetrahydrodipicolinate.

It belongs to the DapB family.

It is found in the cytoplasm. The catalysed reaction is (S)-2,3,4,5-tetrahydrodipicolinate + NAD(+) + H2O = (2S,4S)-4-hydroxy-2,3,4,5-tetrahydrodipicolinate + NADH + H(+). It carries out the reaction (S)-2,3,4,5-tetrahydrodipicolinate + NADP(+) + H2O = (2S,4S)-4-hydroxy-2,3,4,5-tetrahydrodipicolinate + NADPH + H(+). Its pathway is amino-acid biosynthesis; L-lysine biosynthesis via DAP pathway; (S)-tetrahydrodipicolinate from L-aspartate: step 4/4. Functionally, catalyzes the conversion of 4-hydroxy-tetrahydrodipicolinate (HTPA) to tetrahydrodipicolinate. The sequence is that of 4-hydroxy-tetrahydrodipicolinate reductase from Pseudomonas amygdali pv. tabaci (Pseudomonas syringae pv. tabaci).